The chain runs to 486 residues: Malonate-semialdehyde dehydrogenase 2 (486 aa).

The NAD(+) site is built by Phe154, Lys178, Glu181, Arg182, and Ser231. Cys286 functions as the Nucleophile in the catalytic mechanism. Glu386 contacts NAD(+).

The protein belongs to the aldehyde dehydrogenase family. IolA subfamily. In terms of assembly, homotetramer.

The enzyme catalyses 3-oxopropanoate + NAD(+) + CoA + H2O = hydrogencarbonate + acetyl-CoA + NADH + H(+). It carries out the reaction 2-methyl-3-oxopropanoate + NAD(+) + CoA + H2O = propanoyl-CoA + hydrogencarbonate + NADH + H(+). Its pathway is polyol metabolism; myo-inositol degradation into acetyl-CoA; acetyl-CoA from myo-inositol: step 7/7. Catalyzes the oxidation of malonate semialdehyde (MSA) and methylmalonate semialdehyde (MMSA) into acetyl-CoA and propanoyl-CoA, respectively. Is involved in a myo-inositol catabolic pathway. Bicarbonate, and not CO2, is the end-product of the enzymatic reaction. In Oceanobacillus iheyensis (strain DSM 14371 / CIP 107618 / JCM 11309 / KCTC 3954 / HTE831), this protein is Malonate-semialdehyde dehydrogenase 2.